The primary structure comprises 623 residues: Flap endonuclease 1 (623 aa).

The N-domain stretch occupies residues 1 to 106; the sequence is MGIKGLTKFI…SELEKRGEKR (106 aa). Aspartate 34 contacts Mg(2+). DNA contacts are provided by arginine 47 and arginine 72. The Mg(2+) site is built by aspartate 88, glutamate 160, glutamate 162, aspartate 181, and aspartate 183. Positions 124 to 267 are I-domain; it reads EIKKQSGRTV…KTAYNLIKEY (144 aa). Residue glutamate 160 coordinates DNA. Glycine 245 and aspartate 247 together coordinate DNA. Aspartate 247 is a binding site for Mg(2+). The interaction with PCNA stretch occupies residues 350–358; it reads TQRRLDNFF. The segment at 368-517 is disordered; it reads LVIEESQSQS…LSSNSTLHSC (150 aa). Basic and acidic residues-rich tracts occupy residues 410-424 and 466-482; these read TKVE…KDEE and QKSD…KTEQ. The segment covering 502–517 has biased composition (polar residues); it reads AGSNTHLSSNSTLHSC.

This sequence belongs to the XPG/RAD2 endonuclease family. FEN1 subfamily. As to quaternary structure, interacts with PCNA. Three molecules of FEN1 bind to one PCNA trimer with each molecule binding to one PCNA monomer. PCNA stimulates the nuclease activity without altering cleavage specificity. Mg(2+) is required as a cofactor. Phosphorylated. Phosphorylation upon DNA damage induces relocalization to the nuclear plasma.

Its subcellular location is the nucleus. It is found in the nucleolus. The protein localises to the nucleoplasm. The protein resides in the mitochondrion. Functionally, structure-specific nuclease with 5'-flap endonuclease and 5'-3' exonuclease activities involved in DNA replication and repair. During DNA replication, cleaves the 5'-overhanging flap structure that is generated by displacement synthesis when DNA polymerase encounters the 5'-end of a downstream Okazaki fragment. It enters the flap from the 5'-end and then tracks to cleave the flap base, leaving a nick for ligation. Also involved in the long patch base excision repair (LP-BER) pathway, by cleaving within the apurinic/apyrimidinic (AP) site-terminated flap. Acts as a genome stabilization factor that prevents flaps from equilibrating into structures that lead to duplications and deletions. Also possesses 5'-3' exonuclease activity on nicked or gapped double-stranded DNA, and exhibits RNase H activity. Also involved in replication and repair of rDNA and in repairing mitochondrial DNA. In Plasmodium vivax (strain Salvador I), this protein is Flap endonuclease 1.